We begin with the raw amino-acid sequence, 125 residues long: Protein ApaG (125 aa).

The region spanning 1 to 125 (MIDSPRVCVQ…FRLAVPTFIH (125 aa)) is the ApaG domain.

The sequence is that of Protein ApaG from Enterobacter sp. (strain 638).